Here is a 229-residue protein sequence, read N- to C-terminus: Potassium/proton antiporter CemA (229 aa).

Helical transmembrane passes span 7–27, 114–134, 154–174, and 189–209; these read FTPLPYLASIVFLPWWVSLSF, IICFAILSVYSILGNEELVIL, ILLVTDLWIGFHSPHGWELMI, and IISGLVSTFPVILDTIVKYWI.

Belongs to the CemA family.

The protein resides in the plastid. It localises to the chloroplast inner membrane. The catalysed reaction is K(+)(in) + H(+)(out) = K(+)(out) + H(+)(in). In terms of biological role, contributes to K(+)/H(+) antiport activity by supporting proton efflux to control proton extrusion and homeostasis in chloroplasts in a light-dependent manner to modulate photosynthesis. Prevents excessive induction of non-photochemical quenching (NPQ) under continuous-light conditions. Indirectly promotes efficient inorganic carbon uptake into chloroplasts. The chain is Potassium/proton antiporter CemA from Acorus calamus var. americanus (American sweet flag).